Here is a 671-residue protein sequence, read N- to C-terminus: Preterminal protein (671 aa).

The Nuclear localization signal signature appears at 380-389 (RLPVRRRRRR). The interval 386–409 (RRRRVPPPPPPPEEEEEGEALMEE) is disordered. The segment covering 397–409 (PEEEEEGEALMEE) has biased composition (acidic residues). The residue at position 580 (Ser-580) is an O-(5'-phospho-DNA)-serine. Residues 645–671 (GADVPLPPLPAGPEPPLPPGARPRHRF) are disordered. Pro residues predominate over residues 649–665 (PLPPLPAGPEPPLPPGA).

This sequence belongs to the adenoviridae terminal protein family. As to quaternary structure, heterodimer with the polymerase; this heterodimer binds to bp 9 to 18 of the genome. Interacts with host POU2F1; POU2F1 binds to the auxiliary sequences in the inverted terminal repeats and tethers the pTP-POL heterodimer to the origin DNA thereby participating in the assembly of the pre-initiation complex (POL-TP-DBP-NFIA-POU2F1). Post-translationally, preterminal protein is used to replicate viral genome, upon genomic encapsidation it is processed first into iTP and finally into TP by adenovirus protease.

It localises to the host nucleus matrix. Protein covalently bound to the viral DNA that acts as a primer for viral genomic replication by DNA strand displacement. Assembles on the viral origin of replication in an initiation complex with viral polymerase, DBP, host NFIA and host POU2F1/OCT1. During initiation, the polymerase covalently couples the first dCTP with Ser-580 of pTP. The terminal protein stimulates the template activity over 20 fold compared to protein-free templates. Neo-synthesized viral genomes are linked to two preterminal proteins, one for each 5' end. These new genomes are encapsidated in the nucleus, and during capsid maturation by viral protease, preterminal protein is first cleaved into intermediary (iTP), then into mature TP. May play a role in host nuclear matrix localization of genomic DNA. This is Preterminal protein from Homo sapiens (Human).